The sequence spans 429 residues: Adenylosuccinate synthetase (429 aa).

Residues 12–18 (GDEGKGK) and 40–42 (GHT) each bind GTP. Asp13 (proton acceptor) is an active-site residue. The Mg(2+) site is built by Asp13 and Gly40. Residues 13 to 16 (DEGK), 38 to 41 (NAGH), Thr128, Arg142, Gln223, Thr238, and Arg302 each bind IMP. Catalysis depends on His41, which acts as the Proton donor. Position 298 to 304 (298 to 304 (TTTGRPR)) interacts with substrate. GTP-binding positions include Arg304, 330–332 (SID), and 412–414 (SVG).

Belongs to the adenylosuccinate synthetase family. Homodimer. Mg(2+) serves as cofactor.

It localises to the cytoplasm. The catalysed reaction is IMP + L-aspartate + GTP = N(6)-(1,2-dicarboxyethyl)-AMP + GDP + phosphate + 2 H(+). Its pathway is purine metabolism; AMP biosynthesis via de novo pathway; AMP from IMP: step 1/2. Plays an important role in the de novo pathway of purine nucleotide biosynthesis. Catalyzes the first committed step in the biosynthesis of AMP from IMP. This Lysinibacillus sphaericus (strain C3-41) protein is Adenylosuccinate synthetase.